The chain runs to 728 residues: Sodium-dependent transporter snf-5 (728 aa).

The Cytoplasmic segment spans residues 1–84 (MADSGSNEEA…PEEEEEKRDG (84 aa)). The tract at residues 1–84 (MADSGSNEEA…PEEEEEKRDG (84 aa)) is disordered. 2 stretches are compositionally biased toward low complexity: residues 29–50 (QQVSQQSNQLSSQKSIQQSTQS) and 60–73 (KNTTVTTTRPTLDT). A helical transmembrane segment spans residues 85-105 (FGNSFEFVLTSLGLAVGLGNI). Na(+)-binding residues include G97, A99, V100, and N104. Residues 106 to 119 (WRFPTRAYNNGGSA) are Extracellular-facing. A helical membrane pass occupies residues 120–140 (FLIPYLTCAFLFGLPAVYFEF). Over 141 to 162 (LTGQYQGKSPPVIFRRVRPILE) the chain is Cytoplasmic. The helical transmembrane segment at 163 to 183 (GVGWMGVFVAALVAIYYIVIV) threads the bilayer. At 184–285 (SWISIYMINI…PSSGMLDFGG (102 aa)) the chain is on the extracellular side. C204 and C214 are disulfide-bonded. N-linked (GlcNAc...) asparagine glycans are attached at residues N210, N225, N232, N237, and N257. A helical membrane pass occupies residues 286–306 (FNWPVFAAMSVCWLLTGLGIL). Residues 307 to 314 (KGAKIMGK) lie on the Cytoplasmic side of the membrane. The chain crosses the membrane as a helical span at residues 315 to 335 (ISYVSVLVPYVLVVVLFINGV). At 336 to 364 (FQDGSGVGLEMYFGTPNYTKLYEQDTWTE) the chain is on the extracellular side. N352 carries an N-linked (GlcNAc...) asparagine glycan. A helical membrane pass occupies residues 365-386 (ALKQLCFSLSVGHGGLISLSSY). S372 contributes to the Na(+) binding site. Residues 387-396 (SPKRNNIFRD) are Cytoplasmic-facing. Residues 397 to 417 (ALIVIIGDTTMSLVGGGAVFA) traverse the membrane as a helical segment. Residues 418–451 (TLGYLAKATGQDVKDVVKSGLSLAFVVYPEAMTR) are Extracellular-facing. The chain crosses the membrane as a helical span at residues 452–472 (MPVPWLWCFIFFLMLFLLGAS). Na(+) is bound at residue L469. Residues 473 to 495 (TEIALVDVFCSCIYDQYPRFRNR) lie on the Cytoplasmic side of the membrane. The helical transmembrane segment at 496-516 (KWIVVIAWCSVLYCIGLVFST) threads the bilayer. Topologically, residues 517 to 531 (RAGYYWFEMFDEYAA) are extracellular. Residues 532-552 (GFSSVCTVVCELLVMMYIYGF) form a helical membrane-spanning segment. Over 553–578 (RNVRDDITEVVGHARNKFTGAIGAHS) the chain is Cytoplasmic. Residues 579 to 599 (WYFTANWMVISPSIALILVGL) traverse the membrane as a helical segment. Over 600-616 (SFVREYPYMGRHDIYPA) the chain is Extracellular. Residues 617–637 (VFDIFGWFLSFLPVIIVPIFM) traverse the membrane as a helical segment. Residues 638-728 (LLNFIRCRNR…DTSSTYHQVY (91 aa)) are Cytoplasmic-facing. Acidic residues predominate over residues 687 to 699 (PWDEENVDLTDSE). Residues 687–728 (PWDEENVDLTDSESESRNAASGDVPIDDVATIDTSSTYHQVY) form a disordered region. Polar residues predominate over residues 718–728 (IDTSSTYHQVY).

Belongs to the sodium:neurotransmitter symporter (SNF) (TC 2.A.22) family. Expressed in the INT-9 cells and posterior cells of the alimentary canal of the intestine, gut epithelial cells, the pharynx of some worms, two cells of the rectal gland, and in DVA, DVB and DVC neurons and amphid sensory neurons ASI, ADF and ASK neurons.

Its subcellular location is the cell membrane. Functionally, sodium-dependent amino acid transporter that mediates the uptake of the L-enantiomers of various amino acids, including L-proline and L-methionine, and also of acidic amino acids such as L-glutamic acid and L-aspartic acid. May additionally have a role in potassium-dependent amino acid absorption. In response to the availability of amino acid nutrients, may play a role in dauer formation. May play a role in promoting fertility. This is Sodium-dependent transporter snf-5 from Caenorhabditis elegans.